A 339-amino-acid polypeptide reads, in one-letter code: Cyclic AMP-dependent transcription factor ATF-4 (339 aa).

Disordered stretches follow at residues 14 to 62, 153 to 182, and 209 to 313; these read GPWP…PSEL, PEEIKSEPLSPAPSVPSPPEEAPQDEHTEV, and QNIS…EKAD. Residues 35–55 are compositionally biased toward low complexity; sequence VLEGSWSPSSSSLSSFSPPAS. Residues 162–173 show a composition bias toward pro residues; sequence SPAPSVPSPPEE. Residues 211 to 226 show a composition bias toward low complexity; the sequence is ISDCSDSDSGISVSGS. Positions 231–247 are enriched in basic and acidic residues; sequence SDLEPSSRAKPYSRPDP. In terms of domain architecture, bZIP spans 266–329; sequence VEKKLKKMEQ…QYLRDLLEEM (64 aa). The interval 268–288 is basic motif; it reads KKLKKMEQNKTAATRYRQKKR. The leucine-zipper stretch occupies residues 294–322; that stretch reads LNSECSELEKKNRELSEKADSLSREIQYL. Basic and acidic residues predominate over residues 300-313; it reads ELEKKNRELSEKAD.

The protein belongs to the bZIP family. As to quaternary structure, binds DNA as a homodimer and as a heterodimer.

The protein localises to the nucleus. Transcription factor that binds the cAMP response element (CRE) (consensus: 5'-GTGACGT[AC][AG]-3') and displays two biological functions, as regulator of metabolic and redox processes under normal cellular conditions, and as master transcription factor during integrated stress response (ISR). Binds to asymmetric CRE's as a heterodimer and to palindromic CRE's as a homodimer. Core effector of the ISR, which is required for adaptation to various stress such as endoplasmic reticulum (ER) stress, amino acid starvation, mitochondrial stress or oxidative stress. During ISR, atf4 translation is induced via an alternative ribosome translation re-initiation mechanism in response to eif2s1/eIF-2-alpha phosphorylation, and stress-induced atf4 acts as a master transcription factor of stress-responsive genes in order to promote cell recovery. Promotes the transcription of genes linked to amino acid sufficiency and resistance to oxidative stress to protect cells against metabolic consequences of ER oxidation. In the absence of stress, atf4 translation is at low levels and it is required for normal metabolic processes such as embryonic lens formation, fetal liver hematopoiesis, bone development and synaptic plasticity. Acts as a regulator of osteoblast differentiation by promoting expression of osteoblast-specific genes. Regulates the circadian expression of the core clock components. Mainly acts as a transcriptional activator in cellular stress adaptation, but it can also act as a transcriptional repressor. The polypeptide is Cyclic AMP-dependent transcription factor ATF-4 (atf4) (Danio rerio (Zebrafish)).